The following is a 689-amino-acid chain: Methionine--tRNA ligase (689 aa).

Positions 16–26 (PYANAGLHLGH) match the 'HIGH' region motif. The Zn(2+) site is built by Cys147, Cys150, Cys160, and Cys163. The 'KMSKS' region signature appears at 342–346 (KMSKS). Lys345 contributes to the ATP binding site. The tRNA-binding domain maps to 585-689 (DFAKVDLRVG…AGVKPGMRVG (105 aa)).

It belongs to the class-I aminoacyl-tRNA synthetase family. MetG type 1 subfamily. Homodimer. Zn(2+) is required as a cofactor.

The protein resides in the cytoplasm. The enzyme catalyses tRNA(Met) + L-methionine + ATP = L-methionyl-tRNA(Met) + AMP + diphosphate. Is required not only for elongation of protein synthesis but also for the initiation of all mRNA translation through initiator tRNA(fMet) aminoacylation. This is Methionine--tRNA ligase from Chromobacterium violaceum (strain ATCC 12472 / DSM 30191 / JCM 1249 / CCUG 213 / NBRC 12614 / NCIMB 9131 / NCTC 9757 / MK).